The sequence spans 377 residues: Secreted LysM effector Lys2 (377 aa).

The N-terminal stretch at 1-22 is a signal peptide; sequence MVRQSIGLIALQLLNLVSVAQA. The span at 104–119 shows a compositional bias: low complexity; it reads TSSSTATTTSQKPTAT. Residues 104 to 124 form a disordered region; the sequence is TSSSTATTTSQKPTATVSPLP. LysM domains lie at 135–182 and 207–253; these read KYYN…YVCV and KYYK…YYCV.

This sequence belongs to the secreted LysM effector family.

In terms of biological role, might have a role in sequestration of chitin oligosaccharides (breakdown products of fungal cell walls that are released during invasion and act as triggers of host immunity) to dampen host defense. This is Secreted LysM effector Lys2 from Pochonia chlamydosporia (strain 123) (Metacordyceps chlamydosporia).